The primary structure comprises 475 residues: L-ornithine N(5)-monooxygenase (475 aa).

Residues 65–73 (ERQPEFGWH) and Gln-84 each bind FAD. Substrate is bound at residue Lys-89. Val-150 contacts FAD. 238–241 (GGQS) serves as a coordination point for NADP(+). Residues 277-280 (NEIF) and Asn-307 each bind substrate. 307 to 309 (NYG) contributes to the NADP(+) binding site. Residue 446 to 448 (SLL) coordinates FAD. Ser-449 contacts substrate.

It belongs to the lysine N(6)-hydroxylase/L-ornithine N(5)-oxygenase family. In terms of assembly, homotetramer. Requires FAD as cofactor.

It catalyses the reaction L-ornithine + NADPH + O2 = N(5)-hydroxy-L-ornithine + NADP(+) + H2O. The enzyme catalyses L-ornithine + NADH + O2 = N(5)-hydroxy-L-ornithine + NAD(+) + H2O. It functions in the pathway siderophore biosynthesis. Functionally, L-ornithine N(5)-monooxygenase; part of the gene cluster that mediates the biosynthesis of hydroxamate-containing siderophores that play a critical role in virulence via intracellular iron acquisition during macrophage infection. SID1 catalyzes the conversion of L-ornithine to N(5)-hydroxyornithine, the first step in the biosynthesis of all hydroxamate-containing siderophores. This Ajellomyces capsulatus (Darling's disease fungus) protein is L-ornithine N(5)-monooxygenase.